Consider the following 191-residue polypeptide: Ribosome hibernation promotion factor (191 aa).

Residues 100–123 form a disordered region; sequence KQRQEGRPEPLPGPAEAEVNAQGS.

Belongs to the HPF/YfiA ribosome-associated protein family. Long HPF subfamily. In terms of assembly, interacts with 100S ribosomes.

Its subcellular location is the cytoplasm. Its function is as follows. Required for dimerization of active 70S ribosomes into 100S ribosomes in stationary phase; 100S ribosomes are translationally inactive and sometimes present during exponential growth. The protein is Ribosome hibernation promotion factor of Deinococcus radiodurans (strain ATCC 13939 / DSM 20539 / JCM 16871 / CCUG 27074 / LMG 4051 / NBRC 15346 / NCIMB 9279 / VKM B-1422 / R1).